The sequence spans 412 residues: 2-methylacyl-CoA dehydrogenase, mitochondrial (412 aa).

The transit peptide at 1 to 25 (MHKLFAVRSLSSAIVKSFKSLQNQQ) directs the protein to the mitochondrion. FAD is bound by residues 154-163 (LAMSEPNAGS) and 187-189 (WCT). Ser-163 lines the substrate pocket. Substrate contacts are provided by residues 209-210 (SK), Tyr-264, and 271-274 (DLER). The active-site Proton acceptor is Glu-273. FAD-binding positions include Arg-299, Gln-310, and 367–371 (QCLGG). 394-395 (AG) lines the substrate pocket. 396–398 (TSE) is a binding site for FAD.

The protein belongs to the acyl-CoA dehydrogenase family. Homotetramer. FAD is required as a cofactor. As to expression, expressed in flowers.

The protein resides in the mitochondrion. It catalyses the reaction 2-methylbutanoyl-CoA + oxidized [electron-transfer flavoprotein] + H(+) = (2E)-2-methylbut-2-enoyl-CoA + reduced [electron-transfer flavoprotein]. In terms of biological role, short/branched-chain acyl-CoA dehydrogenase (SBCAD). Uses 2-methylbutanoyl-CoA as substrate. Minor activity with the straight-chain substrates, butanoyl-CoA, valeryl-CoA, hexanoyl-CoA, and octanoyl-CoA but no activity with isovaleryl-CoA. The polypeptide is 2-methylacyl-CoA dehydrogenase, mitochondrial (2MBCD) (Solanum tuberosum (Potato)).